Reading from the N-terminus, the 208-residue chain is Small ribosomal subunit protein uS4A (208 aa).

The region spanning 98–159 (SRLDNVAYNM…HAKSYLRIKA (62 aa)) is the S4 RNA-binding domain.

This sequence belongs to the universal ribosomal protein uS4 family. In terms of assembly, part of the 30S ribosomal subunit. Contacts protein S5. The interaction surface between S4 and S5 is involved in control of translational fidelity.

One of the primary rRNA binding proteins, it binds directly to 16S rRNA where it nucleates assembly of the body of the 30S subunit. Its function is as follows. With S5 and S12 plays an important role in translational accuracy. This chain is Small ribosomal subunit protein uS4A (rpsD1), found in Nitrosomonas europaea (strain ATCC 19718 / CIP 103999 / KCTC 2705 / NBRC 14298).